A 335-amino-acid polypeptide reads, in one-letter code: PA-phosphatase related-family protein DDB_G0275547 (335 aa).

Helical transmembrane passes span 43–63 (VMYLFDWMMVVILLIVGGILF), 93–113 (VLIPVIIALPLAIIIVVSLIV), 124–144 (ILGLAQSLALTLLLTGSFKCF), 202–222 (SITAASFGFLALFIHAKFKIF), 226–246 (GHIFLYVIVSGCIIGAGLIGI), and 254–274 (HTFLNVLAGWSIGLIIALSCY).

The protein belongs to the PA-phosphatase related phosphoesterase family.

The protein resides in the membrane. This Dictyostelium discoideum (Social amoeba) protein is PA-phosphatase related-family protein DDB_G0275547.